The primary structure comprises 197 residues: Ribonuclease HII (197 aa).

An RNase H type-2 domain is found at 11-197 (NLIAGVDEVG…FAPVRKILGL (187 aa)). 3 residues coordinate a divalent metal cation: Asp17, Glu18, and Asp109.

The protein belongs to the RNase HII family. The cofactor is Mn(2+). Mg(2+) serves as cofactor.

It is found in the cytoplasm. It carries out the reaction Endonucleolytic cleavage to 5'-phosphomonoester.. Endonuclease that specifically degrades the RNA of RNA-DNA hybrids. This is Ribonuclease HII from Haemophilus ducreyi (strain 35000HP / ATCC 700724).